The sequence spans 292 residues: Nitrogenase iron protein (292 aa).

ATP is bound at residue 8-15 (GKGGIGKS). C96 serves as a coordination point for [4Fe-4S] cluster. The residue at position 99 (R99) is an ADP-ribosylarginine; by dinitrogenase reductase ADP-ribosyltransferase. C130 is a binding site for [4Fe-4S] cluster.

The protein belongs to the NifH/BchL/ChlL family. As to quaternary structure, homodimer. It depends on [4Fe-4S] cluster as a cofactor. The reversible ADP-ribosylation of Arg-99 inactivates the nitrogenase reductase and regulates nitrogenase activity.

The catalysed reaction is N2 + 8 reduced [2Fe-2S]-[ferredoxin] + 16 ATP + 16 H2O = H2 + 8 oxidized [2Fe-2S]-[ferredoxin] + 2 NH4(+) + 16 ADP + 16 phosphate + 6 H(+). Its function is as follows. The key enzymatic reactions in nitrogen fixation are catalyzed by the nitrogenase complex, which has 2 components: the iron protein and the molybdenum-iron protein. The chain is Nitrogenase iron protein from Synechococcus sp. (strain JA-3-3Ab) (Cyanobacteria bacterium Yellowstone A-Prime).